Reading from the N-terminus, the 548-residue chain is MAAKDVLFGDSARAKMLVGVNILADAVRVTLGPKGRNVVIEKSFGAPIITKDGVSVAREIELKDKFENMGAQMVKEVASQANDQAGDGTTTATVLAQAIISEGLKSVAAGMNPMDLKRGIDKATAAVVAAIKEQAQPCLDTKAIAQVGTISANADETVGRLIAEAMEKVGKEGVITVEEGKGLEDELDVVEGMQFDRGYLSPYFINNQEKMTVEMENPLILLVDKKIDNLQELLPILENVAKSGRPLLIVAEDVEGQALATLVVNNLRGTFKVAAVKAPGFGDRRKAMLQDLAILTGGQVISEELGMSLETADPSSLGTASKVVIDKENTVIVDGAGTEASVNTRVDQIRAEIESSTSDYDIEKLQERVAKLAGGVAVIKVGAGSEMEMKEKKDRVDDALHATRAAVEEGVVAGGGVALIRALSSVTVVGDNEDQNVGIALALRAMEAPIRQIAGNAGAEGSVVVDKVKSGTGSFGFNASTGEYGDMIAMGILDPAKVTRSSLQAAASIAGLMITTEAMVADAPVEEGAGGMPDMGGMGGMGGMPGMM.

ATP is bound by residues 30 to 33 (TLGP), lysine 51, 87 to 91 (DGTTT), glycine 415, and aspartate 494.

This sequence belongs to the chaperonin (HSP60) family. As to quaternary structure, forms a cylinder of 14 subunits composed of two heptameric rings stacked back-to-back. Interacts with the co-chaperonin GroES.

The protein resides in the cytoplasm. The enzyme catalyses ATP + H2O + a folded polypeptide = ADP + phosphate + an unfolded polypeptide.. Functionally, together with its co-chaperonin GroES, plays an essential role in assisting protein folding. The GroEL-GroES system forms a nano-cage that allows encapsulation of the non-native substrate proteins and provides a physical environment optimized to promote and accelerate protein folding. This Oleispira antarctica protein is Chaperonin GroEL.